We begin with the raw amino-acid sequence, 243 residues long: Probable HTH-type transcriptional regulator GfsR (243 aa).

The interval 154 to 179 is disordered; that stretch reads AAVARPDTSGSATGRTGDSSPSLALS. Over residues 161–178 the composition is skewed to polar residues; it reads TSGSATGRTGDSSPSLAL. An HTH luxR-type domain is found at 171 to 236; that stretch reads DSSPSLALSP…QALLRWLGHP (66 aa). Positions 195-214 form a DNA-binding region, H-T-H motif; it reads VREIAVEMRLAEKTVRNYLS.

Its pathway is antibiotic biosynthesis. Probable DNA-binding protein that contributes to the control of expression of the biosynthesis operon of the 16-membered macrolide antibiotics FD-891 and FD-892. Might be a member of a two-component regulatory system; the putative sensor kinase gene is unknown. In Streptomyces halstedii, this protein is Probable HTH-type transcriptional regulator GfsR.